An 857-amino-acid polypeptide reads, in one-letter code: Facilitated trehalose transporter Tret1-1 (857 aa).

2 disordered regions span residues 1 to 27 (MSGRDNRGAGGGGGGHQPLSNAMGKLK) and 92 to 203 (SFRP…KATS). Topologically, residues 1-392 (MSGRDNRGAG…VYRPTTNPIY (392 aa)) are cytoplasmic. The segment covering 134-143 (EIREHRDRQQ) has biased composition (basic and acidic residues). Positions 171 to 181 (GNSNTNSNKAA) are enriched in polar residues. Ser248, Ser249, Ser250, Ser320, and Ser322 each carry phosphoserine. The disordered stretch occupies residues 327 to 346 (LTSRQHFQQQRSISTDSRKS). Residues 330 to 341 (RQHFQQQRSIST) are compositionally biased toward polar residues. Residues 393 to 413 (IWTQVLAALSVSLGSLVVGFV) form a helical membrane-spanning segment. Residues 414-440 (SAYTSPALVSMTDRNITSFEVTQDAGS) lie on the Extracellular side of the membrane. The N-linked (GlcNAc...) asparagine glycan is linked to Asn428. The helical transmembrane segment at 441–461 (WVGGIMPLAALAGGITGGPLI) threads the bilayer. Over 462–473 (EYLGRRNTILAT) the chain is Cytoplasmic. Residues 474–494 (AVPFIVSSLLIACAVNVAMVL) form a helical membrane-spanning segment. Residues 495-497 (CGR) are Extracellular-facing. Residues 498-518 (FLAGFCVGIASLSLPVYLGET) traverse the membrane as a helical segment. The Cytoplasmic portion of the chain corresponds to 519-528 (VQPEVRGTLG). Residues 529 to 549 (LLPTAFGNIGILLCFVAGSFM) form a helical membrane-spanning segment. N-linked (GlcNAc...) asparagine glycosylation occurs at Asn550. Residues 550–552 (NWS) lie on the Extracellular side of the membrane. Residues 553–573 (MLAFLGAALPVPFLILMFLIP) traverse the membrane as a helical segment. The Cytoplasmic portion of the chain corresponds to 574–636 (ETPRWFVGRG…ELLKLNNLKP (63 aa)). The chain crosses the membrane as a helical span at residues 637-657 (LSISLGLMFFQQFSGINAVIF). Topologically, residues 658–673 (YTVQIFKDAGSTIDGN) are extracellular. A helical membrane pass occupies residues 674-694 (LCTIIVGIVNFLATFIGIVLI). Residues 695–700 (DRAGRK) are Cytoplasmic-facing. The chain crosses the membrane as a helical span at residues 701–721 (ILLYVSDIAMVLTLFVLGGFF). Over 722–740 (YCKANGPDVSHLGWLPLTC) the chain is Extracellular. A helical membrane pass occupies residues 741–761 (FVIYILGFSLGFGPIPWLMMG). Residues 762 to 767 (EILPAK) lie on the Cytoplasmic side of the membrane. The chain crosses the membrane as a helical span at residues 768–788 (IRGSAASVATAFNWFCTFVVT). The Extracellular portion of the chain corresponds to 789-801 (KTFQDLTVAMGAH). A helical transmembrane segment spans residues 802–822 (GAFWLFGAICFVGLFFVIIYV). Over 823 to 857 (PETQGKTLEDIERKMMGRVRRMSSVANIKPLSFNM) the chain is Cytoplasmic. Residues Ser845 and Ser846 each carry the phosphoserine modification.

The protein belongs to the major facilitator superfamily. Sugar transporter (TC 2.A.1.1) family. Trehalose transporter subfamily.

Its subcellular location is the cell membrane. In terms of biological role, low-capacity facilitative transporter for trehalose. Does not transport maltose, sucrose or lactose. Mediates the bidirectional transfer of trehalose. Responsible for the transport of trehalose synthesized in the fat body and the incorporation of trehalose into other tissues that require a carbon source, thereby regulating trehalose levels in the hemolymph. In Drosophila sechellia (Fruit fly), this protein is Facilitated trehalose transporter Tret1-1.